Reading from the N-terminus, the 649-residue chain is Protein phosphatase Slingshot homolog 3 (649 aa).

Positions 1 to 20 are enriched in polar residues; sequence MALVTVSRSPPASGHSTPVG. The segment at 1 to 32 is disordered; that stretch reads MALVTVSRSPPASGHSTPVGPTQDRVVRRRGR. An N-acetylalanine modification is found at Ala2. Ser9 and Ser38 each carry phosphoserine. Residues 49 to 90 form a disordered region; that stretch reads LQDGGDSNVASEADSEPMEEPSGEEQPTEDQTDKGQGLQSPW. A compositionally biased stretch (acidic residues) spans 61–78; sequence ADSEPMEEPSGEEQPTED. Ser88 carries the post-translational modification Phosphoserine. The 56-residue stretch at 266–321 folds into the DEK-C domain; it reads EKMEQAILAELWQVLDTSDLDSVTSKEIRQALELRLGCPLQQYRDFIDNQMLLLMA. The region spanning 325-466 is the Tyrosine-protein phosphatase domain; the sequence is RASRIFPHLY…LRTYQGILTA (142 aa). Cys410 serves as the catalytic Phosphocysteine intermediate. 2 stretches are compositionally biased toward low complexity: residues 541 to 551 and 608 to 627; these read LEPSESESTPE and TRAFQEQGQGQEQSEPGMSS. 2 disordered regions span residues 541-586 and 608-649; these read LEPS…KGPW and TRAF…EDKA. The segment covering 639–649 has biased composition (basic and acidic residues); that stretch reads SVDDSREEDKA.

This sequence belongs to the protein-tyrosine phosphatase family. Does not bind to, or colocalize with, filamentous actin. As to expression, expressed in brain, small intestine and testis. Also expressed at lower levels in heart, kidney, liver, spleen and thymus.

The protein localises to the cytoplasm. The protein resides in the cytoskeleton. Its subcellular location is the nucleus. It catalyses the reaction O-phospho-L-tyrosyl-[protein] + H2O = L-tyrosyl-[protein] + phosphate. It carries out the reaction O-phospho-L-seryl-[protein] + H2O = L-seryl-[protein] + phosphate. The enzyme catalyses O-phospho-L-threonyl-[protein] + H2O = L-threonyl-[protein] + phosphate. Its function is as follows. Protein phosphatase which may play a role in the regulation of actin filament dynamics. Can dephosphorylate and activate the actin binding/depolymerizing factor cofilin, which subsequently binds to actin filaments and stimulates their disassembly. The polypeptide is Protein phosphatase Slingshot homolog 3 (Ssh3) (Mus musculus (Mouse)).